Consider the following 127-residue polypeptide: Lymphocyte antigen 6D (127 aa).

Residues 1–20 form the signal peptide; it reads MKTALLVLLVLAVATSPAWA. Positions 21–108 constitute a UPAR/Ly6 domain; sequence LRCHVCTNSA…AAPGHALLSS (88 aa). 5 cysteine pairs are disulfide-bonded: Cys23–Cys45, Cys26–Cys32, Cys38–Cys63, Cys67–Cys86, and Cys87–Cys92. Ser98 is lipidated: GPI-anchor amidated serine. A propeptide spans 99–127 (removed in mature form); the sequence is AAPGHALLSSVTLGLATSLSLLTVMALCL.

In terms of tissue distribution, lymphoid cells lacking Ly6d, called ALP (all-lymphoid progenitor), retain full lymphoid potential and early thymic seeding activity, whereas cells containing Ly6d, called BLP (B-cell-biased lymphoid progenitor), up-regulate the B-cell specifying factors Ebf1 and Pax5 and behave essentially as B-cell progenitors (at protein level). Thymocytes and B-cells.

The protein localises to the cell membrane. Its function is as follows. May act as a specification marker at earliest stage specification of lymphocytes between B- and T-cell development. Marks the earliest stage of B-cell specification. The chain is Lymphocyte antigen 6D (Ly6d) from Mus musculus (Mouse).